The following is a 507-amino-acid chain: Maturase K (507 aa).

This sequence belongs to the intron maturase 2 family. MatK subfamily.

It is found in the plastid. It localises to the chloroplast. Its function is as follows. Usually encoded in the trnK tRNA gene intron. Probably assists in splicing its own and other chloroplast group II introns. The sequence is that of Maturase K from Robinia pseudoacacia (Black locust).